The sequence spans 405 residues: Argininosuccinate synthase (405 aa).

Residues 10-18 (AYSGGLDTS) and Ala-37 contribute to the ATP site. Residues Tyr-88 and Ser-93 each coordinate L-citrulline. Gly-118 is an ATP binding site. L-aspartate contacts are provided by Thr-120, Asn-124, and Asp-125. Asn-124 contacts L-citrulline. The L-citrulline site is built by Arg-128, Ser-179, Ser-188, Glu-264, and Tyr-276.

This sequence belongs to the argininosuccinate synthase family. Type 1 subfamily. Homotetramer.

The protein localises to the cytoplasm. It catalyses the reaction L-citrulline + L-aspartate + ATP = 2-(N(omega)-L-arginino)succinate + AMP + diphosphate + H(+). It functions in the pathway amino-acid biosynthesis; L-arginine biosynthesis; L-arginine from L-ornithine and carbamoyl phosphate: step 2/3. The protein is Argininosuccinate synthase of Pseudomonas fluorescens (strain ATCC BAA-477 / NRRL B-23932 / Pf-5).